A 137-amino-acid chain; its full sequence is MAESTFMLEVVTPERILYRDEIQFMVAPGIEGELGIMKNHAPLVAALNIGVLRYQTSTGVDKRMAISGGFMEVIDNGTRVLAETAEHGSEIDVLRAKAAKERAEKRLEVRSEEINHARAKMALQRAIARIRASEKPL.

It belongs to the ATPase epsilon chain family. In terms of assembly, F-type ATPases have 2 components, CF(1) - the catalytic core - and CF(0) - the membrane proton channel. CF(1) has five subunits: alpha(3), beta(3), gamma(1), delta(1), epsilon(1). CF(0) has three main subunits: a, b and c.

It localises to the cell membrane. Produces ATP from ADP in the presence of a proton gradient across the membrane. The polypeptide is ATP synthase epsilon chain (Syntrophomonas wolfei subsp. wolfei (strain DSM 2245B / Goettingen)).